We begin with the raw amino-acid sequence, 305 residues long: Epoxyqueuosine reductase (305 aa).

Asp-128 (proton donor) is an active-site residue. The 33-residue stretch at 170-202 (LSLTSDTPHAKYCGTCRKCLDICPTKAIVHPFV) folds into the 4Fe-4S ferredoxin-type domain. Cys-182, Cys-185, Cys-188, Cys-192, Cys-208, Cys-236, Cys-239, and Cys-243 together coordinate [4Fe-4S] cluster.

This sequence belongs to the QueG family. Monomer. It depends on cob(II)alamin as a cofactor. [4Fe-4S] cluster serves as cofactor.

It localises to the cytoplasm. The catalysed reaction is epoxyqueuosine(34) in tRNA + AH2 = queuosine(34) in tRNA + A + H2O. Its pathway is tRNA modification; tRNA-queuosine biosynthesis. Functionally, catalyzes the conversion of epoxyqueuosine (oQ) to queuosine (Q), which is a hypermodified base found in the wobble positions of tRNA(Asp), tRNA(Asn), tRNA(His) and tRNA(Tyr). The polypeptide is Epoxyqueuosine reductase (Atelocyanobacterium thalassa (isolate ALOHA)).